Reading from the N-terminus, the 451-residue chain is MGKYFGTDGVRGEANVELTPELAFKLGRFGGYVLSQHETERPKVFVARDTRISGEMLESALIAGLLSVGIEVYKLGVLATPGVSYLVRTEKASAGVMISASHNPALDNGIKFFGNDGFKLADDQELEIEALLDAPEDTLPRPSAEGLGTLVDYPEGLRKYEKFLVTTGTDLSGMTVALDTANGAASVSARDVFLDLNAEIAVIGEKPNGLNINDGVGSTHPEQLQELVKETGADLGLAFDGDSDRLIAVDETGEIVDGDRIIFIIGKYLSEKGLLAHNTIVTTVMSNLGFHKALDKQGINKAITAVGDRYVVEEMRSSGYNLGGEQSGHVIIMDYNTTGDGQLTAIQLAKVMKETGKSLSELAAEVTIYPQKLVNIRVENSMKDRAMEVPAIANIIAKMEDEMAGNGRILVRPSGTEPLLRVMAEAPTDAEVDYYVDTIADVVRTEIGCDN.

The active-site Phosphoserine intermediate is Ser101. Residues Ser101, Asp240, Asp242, and Asp244 each contribute to the Mg(2+) site. At Ser101 the chain carries Phosphoserine.

Belongs to the phosphohexose mutase family. Mg(2+) is required as a cofactor. In terms of processing, activated by phosphorylation.

It catalyses the reaction alpha-D-glucosamine 1-phosphate = D-glucosamine 6-phosphate. In terms of biological role, catalyzes the conversion of glucosamine-6-phosphate to glucosamine-1-phosphate. In Streptococcus pyogenes serotype M12 (strain MGAS2096), this protein is Phosphoglucosamine mutase.